The primary structure comprises 346 residues: F(420)H(2) dehydrogenase subunit F (346 aa).

4Fe-4S ferredoxin-type domains are found at residues 5–34 (IAEV…VKKA) and 46–76 (YEKG…ENEL). 8 residues coordinate [4Fe-4S] cluster: Cys14, Cys17, Cys20, Cys24, Cys55, Cys58, Cys61, and Cys65.

The FPO complex is composed of at least 13 different subunits. Requires [4Fe-4S] cluster as cofactor. FAD is required as a cofactor.

Its subcellular location is the membrane. It localises to the cytoplasm. It catalyses the reaction methanophenazine + reduced coenzyme F420-(gamma-L-Glu)(n) = dihydromethanophenazine + oxidized coenzyme F420-(gamma-L-Glu)(n) + H(+). The enzyme catalyses reduced coenzyme F420-(gamma-L-Glu)(n) + 2 oxidized [2Fe-2S]-[ferredoxin] = oxidized coenzyme F420-(gamma-L-Glu)(n) + 2 reduced [2Fe-2S]-[ferredoxin] + 3 H(+). Functionally, component of the F(420)H(2) dehydrogenase (FPO complex) which is part of the energy-conserving F(420)H(2):heterodisulfide oxidoreductase system. The membrane-bound electron transfer system of the complex plays an important role in the metabolism of methylotrophic methanogens when the organisms grow on methanol or methylamines. Catalyzes the oxidation of methanophenazine to dihydromethanophenazine. It shuttles electrons from F(420)H(2), via FAD and iron-sulfur (Fe-S) centers, to methanophenazine (an electron carrier in the membrane). It couples the redox reaction to proton translocation (for every two electrons transferred, two hydrogen ions are translocated across the cytoplasmic membrane), and thus conserves the redox energy in a proton gradient. It also catalyzes the oxidation of F(420)H(2) with quinones such as 2,3-dimethyl-1,4-naphthoquinone, 2-methyl-1,4-naphthoquinone and tetramethyl-p-benzoquinone. Might have a dual function, acting as an electron input module when connected to the membrane integral Fpo complex, or as a soluble single subunit, being involved in the reoxydation of reduced ferredoxin in the cytoplasm. The protein is F(420)H(2) dehydrogenase subunit F (fpoF) of Methanosarcina mazei (strain ATCC BAA-159 / DSM 3647 / Goe1 / Go1 / JCM 11833 / OCM 88) (Methanosarcina frisia).